The sequence spans 207 residues: Segregation and condensation protein B (207 aa).

It belongs to the ScpB family. Homodimer. Homodimerization may be required to stabilize the binding of ScpA to the Smc head domains. Component of a cohesin-like complex composed of ScpA, ScpB and the Smc homodimer, in which ScpA and ScpB bind to the head domain of Smc. The presence of the three proteins is required for the association of the complex with DNA.

The protein resides in the cytoplasm. Participates in chromosomal partition during cell division. May act via the formation of a condensin-like complex containing Smc and ScpA that pull DNA away from mid-cell into both cell halves. This chain is Segregation and condensation protein B, found in Mycoplasmopsis pulmonis (strain UAB CTIP) (Mycoplasma pulmonis).